We begin with the raw amino-acid sequence, 127 residues long: Small ribosomal subunit protein uS13 (127 aa).

The segment at 95–127 (GLPVHGQRTSTNARTRKGPRRAAVKKKGGAKKK) is disordered. Basic residues predominate over residues 108 to 127 (RTRKGPRRAAVKKKGGAKKK).

It belongs to the universal ribosomal protein uS13 family. As to quaternary structure, part of the 30S ribosomal subunit. Forms a loose heterodimer with protein S19. Forms two bridges to the 50S subunit in the 70S ribosome.

Its function is as follows. Located at the top of the head of the 30S subunit, it contacts several helices of the 16S rRNA. In the 70S ribosome it contacts the 23S rRNA (bridge B1a) and protein L5 of the 50S subunit (bridge B1b), connecting the 2 subunits; these bridges are implicated in subunit movement. Contacts the tRNAs in the A and P-sites. The protein is Small ribosomal subunit protein uS13 of Desulfatibacillum aliphaticivorans.